A 376-amino-acid chain; its full sequence is Respiration factor 1 (376 aa).

Disordered regions lie at residues 1–23 (MKDL…DNRG), 88–107 (VNVT…NSTK), 258–279 (FKEK…TGSS), and 347–376 (GVNE…QHTN). The span at 354–376 (NSSNLNNSNSGTPHNHNQNQHTN) shows a compositional bias: low complexity.

It is found in the cytoplasm. The protein resides in the nucleus. Its subcellular location is the mitochondrion. Functionally, mitochondrial and nuclear transcriptional activator required for respiratory growth. The sequence is that of Respiration factor 1 (RSF1) from Saccharomyces cerevisiae (strain YJM789) (Baker's yeast).